The chain runs to 327 residues: Transcription factor bHLH48 (327 aa).

Residues glutamate 137–lysine 179 form a disordered region. In terms of domain architecture, bHLH spans glutamine 191–leucine 241.

As to quaternary structure, homodimer. As to expression, expressed in leaves, stems, and flowers.

Its subcellular location is the nucleus. This Arabidopsis thaliana (Mouse-ear cress) protein is Transcription factor bHLH48 (BHLH48).